Reading from the N-terminus, the 336-residue chain is UDP-N-acetylglucosamine--N-acetylmuramyl-(pentapeptide) pyrophosphoryl-undecaprenol N-acetylglucosamine transferase (336 aa).

UDP-N-acetyl-alpha-D-glucosamine contacts are provided by residues 10–12 (TGG), Asn124, Arg157, Ser179, and Gln277.

The protein belongs to the glycosyltransferase 28 family. MurG subfamily.

It is found in the cell inner membrane. The catalysed reaction is di-trans,octa-cis-undecaprenyl diphospho-N-acetyl-alpha-D-muramoyl-L-alanyl-D-glutamyl-meso-2,6-diaminopimeloyl-D-alanyl-D-alanine + UDP-N-acetyl-alpha-D-glucosamine = di-trans,octa-cis-undecaprenyl diphospho-[N-acetyl-alpha-D-glucosaminyl-(1-&gt;4)]-N-acetyl-alpha-D-muramoyl-L-alanyl-D-glutamyl-meso-2,6-diaminopimeloyl-D-alanyl-D-alanine + UDP + H(+). Its pathway is cell wall biogenesis; peptidoglycan biosynthesis. Functionally, cell wall formation. Catalyzes the transfer of a GlcNAc subunit on undecaprenyl-pyrophosphoryl-MurNAc-pentapeptide (lipid intermediate I) to form undecaprenyl-pyrophosphoryl-MurNAc-(pentapeptide)GlcNAc (lipid intermediate II). The protein is UDP-N-acetylglucosamine--N-acetylmuramyl-(pentapeptide) pyrophosphoryl-undecaprenol N-acetylglucosamine transferase of Wolinella succinogenes (strain ATCC 29543 / DSM 1740 / CCUG 13145 / JCM 31913 / LMG 7466 / NCTC 11488 / FDC 602W) (Vibrio succinogenes).